We begin with the raw amino-acid sequence, 796 residues long: Fibroblast growth factor receptor 3 (796 aa).

Positions 1-19 (MLVWLCGLCLVTLAGGRSA) are cleaved as a signal peptide. At 20–358 (ARLPLTEGRP…AEPVPDVDTS (339 aa)) the chain is on the extracellular side. The region spanning 21-119 (RLPLTEGRPT…VLRNVTVRVT (99 aa)) is the Ig-like C2-type 1 domain. Cys-56 and Cys-102 form a disulfide bridge. N-linked (GlcNAc...) asparagine glycosylation is found at Asn-91 and Asn-113. The interval 117–142 (RVTDSPSSGDDEDDDEESESANAPKF) is disordered. A compositionally biased stretch (acidic residues) spans 125-135 (GDDEDDDEESE). Ig-like C2-type domains lie at 140-233 (PKFT…YTLD) and 239-344 (PHRP…AWLT). Cys-165 and Cys-217 form a disulfide bridge. N-linked (GlcNAc...) asparagine glycans are attached at residues Asn-214, Asn-251, Asn-283, Asn-304, and Asn-317. Cys-264 and Cys-328 are oxidised to a cystine. Residues 359–379 (VSILAAAGCVAVVILVVIIIF) form a helical membrane-spanning segment. At 380–796 (TYKMKMPSKK…HQQYNGVIRT (417 aa)) the chain is on the cytoplasmic side. A Protein kinase domain is found at 457-746 (LTLGKPLGEG…LTVTSTDEYL (290 aa)). ATP-binding positions include 463-471 (LGEGCFGQV) and Lys-493. Asp-602 serves as the catalytic Proton acceptor. Tyr-632, Tyr-633, Tyr-709, and Tyr-745 each carry phosphotyrosine; by autocatalysis.

It belongs to the protein kinase superfamily. Tyr protein kinase family. Fibroblast growth factor receptor subfamily. In terms of assembly, monomer. Homodimer after ligand binding. In terms of processing, autophosphorylated. Binding of FGF family members together with heparan sulfate proteoglycan or heparin promotes receptor dimerization and autophosphorylation on tyrosine residues. Autophosphorylation occurs in trans between the two FGFR molecules present in the dimer. In terms of tissue distribution, undetectable in the adult skeletal muscle. Low levels of expression were detected in the liver, lung and kidney. Medium levels of expression were detected in the heart, spleen, intestine and eye. Highest expression is observed in the testis.

The protein resides in the cell membrane. The enzyme catalyses L-tyrosyl-[protein] + ATP = O-phospho-L-tyrosyl-[protein] + ADP + H(+). With respect to regulation, present in an inactive conformation in the absence of bound ligand. Ligand binding leads to dimerization and activation by autophosphorylation on tyrosine residues. Its function is as follows. Tyrosine-protein kinase that acts as a cell-surface receptor for fibroblast growth factors and plays an essential role in the regulation of cell proliferation, differentiation and apoptosis. Plays an essential role in the regulation of chondrocyte differentiation, proliferation and apoptosis, and is required for normal skeleton development. Regulates both osteogenesis and postnatal bone mineralization by osteoblasts. Promotes apoptosis in chondrocytes, but can also promote cancer cell proliferation. Phosphorylates PLCG1, CBL and FRS2. Ligand binding leads to the activation of several signaling cascades. Activation of PLCG1 leads to the production of the cellular signaling molecules diacylglycerol and inositol 1,4,5-trisphosphate. Phosphorylation of FRS2 triggers recruitment of GRB2, GAB1, PIK3R1 and SOS1, and mediates activation of RAS, MAPK1/ERK2, MAPK3/ERK1 and the MAP kinase signaling pathway, as well as of the AKT1 signaling pathway. This chain is Fibroblast growth factor receptor 3 (FGFR3), found in Pleurodeles waltl (Iberian ribbed newt).